Reading from the N-terminus, the 340-residue chain is Cytoskeleton protein RodZ (340 aa).

Residues 1–111 are Cytoplasmic-facing; sequence MNTEATQEKS…LGKQRKKRDG (111 aa). Residues 19 to 79 enclose the HTH cro/C1-type domain; that stretch reads LRTAREQMGL…RLVHVPEEEL (61 aa). Positions 30-49 form a DNA-binding region, H-T-H motif; the sequence is QQNVAERLCLKLSTIRDIEE. Residues 112–132 traverse the membrane as a helical; Signal-anchor for type II membrane protein segment; that stretch reads WLMIFTWLVLFVVLGLTGAWW. Over 133 to 340 the chain is Periplasmic; it reads WQNHKAAQDD…QVARLTVGAP (208 aa). Residues 162-252 are disordered; that stretch reads ALSDDNANGG…AAPLPTGSAA (91 aa). The segment covering 183-201 has biased composition (polar residues); it reads ATANNAPSSVTATSDNGTP. The segment covering 202–233 has biased composition (low complexity); sequence AATAQSSQVTASNAAPAANAVNDNTPPVAVAP.

Belongs to the RodZ family.

Its subcellular location is the cell inner membrane. Cytoskeletal protein that is involved in cell-shape control through regulation of the length of the long axis. The polypeptide is Cytoskeleton protein RodZ (Erwinia tasmaniensis (strain DSM 17950 / CFBP 7177 / CIP 109463 / NCPPB 4357 / Et1/99)).